A 685-amino-acid chain; its full sequence is Glycine--tRNA ligase beta subunit (685 aa).

It belongs to the class-II aminoacyl-tRNA synthetase family. As to quaternary structure, tetramer of two alpha and two beta subunits.

The protein resides in the cytoplasm. The enzyme catalyses tRNA(Gly) + glycine + ATP = glycyl-tRNA(Gly) + AMP + diphosphate. This chain is Glycine--tRNA ligase beta subunit, found in Leuconostoc mesenteroides subsp. mesenteroides (strain ATCC 8293 / DSM 20343 / BCRC 11652 / CCM 1803 / JCM 6124 / NCDO 523 / NBRC 100496 / NCIMB 8023 / NCTC 12954 / NRRL B-1118 / 37Y).